Consider the following 346-residue polypeptide: Anthocyanidin 3-O-glucosyltransferase 2 (346 aa).

Ala221, Gln223, His238, Trp241, Asn242, Ser243, and Glu246 together coordinate UDP-alpha-D-glucose. Residue Ala261 coordinates an anthocyanidin. UDP-alpha-D-glucose contacts are provided by Glu262 and Gln263.

It belongs to the UDP-glycosyltransferase family. In terms of tissue distribution, expressed in cotyledons, roots and leaves.

It catalyses the reaction an anthocyanidin + UDP-alpha-D-glucose + H(+) = an anthocyanidin 3-O-beta-D-glucoside + UDP. It participates in pigment biosynthesis; anthocyanin biosynthesis. Its function is as follows. In the presence of other necessary color factors, this glycosylation reaction allows the accumulation of anthocyanin pigments. In Manihot esculenta (Cassava), this protein is Anthocyanidin 3-O-glucosyltransferase 2 (GT2).